A 77-amino-acid chain; its full sequence is Secapin-2 (77 aa).

Positions 1 to 32 (MKNYSKNATYLITVLLFSFVTMLLIIPSKCEA) are cleaved as a signal peptide. Residues 33–52 (VSNDMQPLEARTADLVQQPR) constitute a propeptide that is removed on maturation. An intrachain disulfide couples C61 to C72. Position 77 is a proline amide (P77).

The protein belongs to the secapin family. In terms of tissue distribution, expressed by the venom gland.

It localises to the secreted. Its function is as follows. Serine protease inhibitor which exhibits antifibrinolytic, antielastolytic and antimicrobial activities. Displays antimicrobial activity against bacteria and fungi. Likely functions in the innate immune response to microbial infection and possibly in the venom, as an antifibrinolytic agent. Induces hyperalgesia and edema mediated by leukotrienes when injected into mice. Does not induce hemolytic activity, mast cell degranulation, or chemotactic activity for polymorphonucleated leukocytes (PMNL). This is Secapin-2 from Apis mellifera (Honeybee).